The sequence spans 492 residues: MDPYKNRPSSAFNSPFWTTNSGAPIWNNNSSLTVGSRGPILLEDYHLVEKLANFDRERIPERVVHARGASAKGFFEVTHDISHLTCADFLRAPGVQTPLIVRFSTVIHERGSPETLRDPRGFAVKFYTREGNFDLVGNNFPVFFVRDGLKFPDMVHALKPNPKSHIQENWRILDFFSHHPESLHMFSFLFDDVGIPQDYRHMDGFGVNTYTLINKAGKALYVKFHWKTTSGEKSLLDDEAIRVGGSNHSHATQDLYDSIAAGNYPEWKLYIQTLDPENEDRLDFDPLDVTKTWPEDVLPLQPVGRMVLNKNIDNFFAENEQLAFCPAIIVPGVYYSDDKLLQTRVFSYADTQRHRLGPNYLQLPANAPKCAHHNNHHDGFMNFMHRDEEVNYFPSRYDPVRHAEKVPVPPRILGGKREKCMIEKENNFKQPGERYRSWPSDRQERFVRRWVDALSDPRVTHEIRSIWISYWSQADRSLGQKIASHLNLKPSI.

Active-site residues include His65 and Asn138. Residue Tyr348 participates in heme binding.

It belongs to the catalase family. In terms of assembly, homotetramer. The cofactor is heme.

The protein localises to the cytoplasm. Its subcellular location is the cytosol. It is found in the peroxisome matrix. The catalysed reaction is 2 H2O2 = O2 + 2 H2O. Functionally, catalyzes the degradation of hydrogen peroxide (H(2)O(2)) generated by peroxisomal oxidases to water and oxygen, thereby protecting cells from the toxic effects of hydrogen peroxide. In Glycine max (Soybean), this protein is Catalase-1/2 (CAT1).